We begin with the raw amino-acid sequence, 430 residues long: Asparagine--tRNA ligase (430 aa).

Belongs to the class-II aminoacyl-tRNA synthetase family. In terms of assembly, homodimer.

Its subcellular location is the cytoplasm. The enzyme catalyses tRNA(Asn) + L-asparagine + ATP = L-asparaginyl-tRNA(Asn) + AMP + diphosphate + H(+). The protein is Asparagine--tRNA ligase of Staphylococcus epidermidis (strain ATCC 35984 / DSM 28319 / BCRC 17069 / CCUG 31568 / BM 3577 / RP62A).